Reading from the N-terminus, the 338-residue chain is MKVYYDKDCDLSIIQSKKVAIIGYGSQGHAHACNLKDSGVDVYVGLRAGSASVAKAEAHGLTVKSVKDAVAAADVVMILTPDEFQGRLYKDEIEPNLKKGATLAFAHGFSIHYNQVVPRADLDVIMIAPKAPGHTVRSEFVRGGGIPDLIAVYQDASGNAKNLALSYACGVGGGRTGIIETTFKDETETDLFGEQAVLCGGCVELVKAGFETLVEAGYAPEMAYFECLHELKLIVDLMFEGGIANMNYSISNNAEYGEYVTGPEVINEQSRQAMRNALKRIQDGEYAKMFITEGAANYPSMTAYRRNNAAHQIEVVGEKLRTMMPWIAANKIVDKTKN.

A KARI N-terminal Rossmann domain is found at 1-181 (MKVYYDKDCD…GGGRTGIIET (181 aa)). NADP(+)-binding positions include 24 to 27 (YGSQ), Arg47, Ser50, Ser52, and 82 to 85 (DEFQ). The active site involves His107. Residue Gly133 coordinates NADP(+). Residues 182–327 (TFKDETETDL…EKLRTMMPWI (146 aa)) enclose the KARI C-terminal knotted domain. Residues Asp190, Glu194, Glu226, and Glu230 each contribute to the Mg(2+) site. Residue Ser251 coordinates substrate.

Belongs to the ketol-acid reductoisomerase family. Requires Mg(2+) as cofactor.

It carries out the reaction (2R)-2,3-dihydroxy-3-methylbutanoate + NADP(+) = (2S)-2-acetolactate + NADPH + H(+). It catalyses the reaction (2R,3R)-2,3-dihydroxy-3-methylpentanoate + NADP(+) = (S)-2-ethyl-2-hydroxy-3-oxobutanoate + NADPH + H(+). It participates in amino-acid biosynthesis; L-isoleucine biosynthesis; L-isoleucine from 2-oxobutanoate: step 2/4. Its pathway is amino-acid biosynthesis; L-valine biosynthesis; L-valine from pyruvate: step 2/4. In terms of biological role, involved in the biosynthesis of branched-chain amino acids (BCAA). Catalyzes an alkyl-migration followed by a ketol-acid reduction of (S)-2-acetolactate (S2AL) to yield (R)-2,3-dihydroxy-isovalerate. In the isomerase reaction, S2AL is rearranged via a Mg-dependent methyl migration to produce 3-hydroxy-3-methyl-2-ketobutyrate (HMKB). In the reductase reaction, this 2-ketoacid undergoes a metal-dependent reduction by NADPH to yield (R)-2,3-dihydroxy-isovalerate. The polypeptide is Ketol-acid reductoisomerase (NADP(+)) (Azotobacter vinelandii (strain DJ / ATCC BAA-1303)).